A 93-amino-acid chain; its full sequence is Small ribosomal subunit protein uS19 (93 aa).

Belongs to the universal ribosomal protein uS19 family.

Protein S19 forms a complex with S13 that binds strongly to the 16S ribosomal RNA. The protein is Small ribosomal subunit protein uS19 of Saccharopolyspora erythraea (strain ATCC 11635 / DSM 40517 / JCM 4748 / NBRC 13426 / NCIMB 8594 / NRRL 2338).